The primary structure comprises 135 residues: MVLETISRIIKIQLPAYLKKLPLPETIGGFARLTVSDWLRLLPLLGILALLGYLTIRPFLPKKKKQKDSLINLEIQKENPKVVNEIDIEDLNRTNVCYCRCWRSKTFPVCDKSHIKHNELTGDNVGPLILKKKIL.

Topologically, residues 1–37 are lumenal; the sequence is MVLETISRIIKIQLPAYLKKLPLPETIGGFARLTVSD. The chain crosses the membrane as a helical span at residues 38–60; that stretch reads WLRLLPLLGILALLGYLTIRPFL. Topologically, residues 61 to 135 are cytoplasmic; that stretch reads PKKKKQKDSL…GPLILKKKIL (75 aa). [2Fe-2S] cluster is bound by residues C99, C101, C110, and H114.

Belongs to the CISD protein family. CISD2 subfamily. In terms of assembly, homodimer. The cofactor is [2Fe-2S] cluster.

Its subcellular location is the endoplasmic reticulum membrane. The protein resides in the mitochondrion outer membrane. Regulator of autophagy that contributes to antagonize becn1-mediated cellular autophagy at the endoplasmic reticulum. Participates in the interaction of bcl2 with becn1 and is required for bcl2-mediated depression of endoplasmic reticulum Ca(2+) stores during autophagy. The chain is CDGSH iron-sulfur domain-containing protein 2A (cisd2a) from Oncorhynchus mykiss (Rainbow trout).